The chain runs to 1285 residues: Period circadian protein homolog 1 (1285 aa).

The interval 1–134 is disordered; the sequence is MSGPLEGADG…SSEQSARART (134 aa). The interval 1–151 is interaction with BTRC; that stretch reads MSGPLEGADG…LRELKLRLPP (151 aa). 2 stretches are compositionally biased toward low complexity: residues 48–57 and 64–115; these read NSNGSSGNES and GASQ…ASSE. A compositionally biased stretch (polar residues) spans 116–132; it reads QDNPSTSGCSSEQSARA. Threonine 121 carries the phosphothreonine; by CSNK1E modification. Serine 122 and serine 126 each carry phosphoserine; by CSNK1E. The Nuclear export signal 1 signature appears at 138–147; the sequence is LMTALRELKL. PAS domains lie at 208 to 275 and 348 to 414; these read ITSE…PFRL and YEAP…KILQ. One can recognise a PAC domain in the interval 422–465; that stretch reads HSPIRFCARNGEYVTMDTSWAGFVHPWSRKVAFVLGRHKVRTAP. The Nuclear export signal 2 motif lies at 489–498; it reads LSEQIHRLLL. Disordered stretches follow at residues 503 to 544 and 643 to 694; these read SSSP…PAPV and TKRK…KEPV. 2 stretches are compositionally biased toward low complexity: residues 523 to 533 and 648 to 658; these read SPGSSSDSNGG and ASSSSCTASSA. The tract at residues 592–811 is required for phosphorylation by CSNK1E; that stretch reads ELEVVPMPNQ…GLDSSSATPS (220 aa). 4 positions are modified to phosphoserine: serine 657, serine 659, serine 700, and serine 811. 2 disordered regions span residues 802 to 867 and 931 to 1030; these read GLDS…PPST and LSQA…DALS. The short motif at 820-836 is the Nuclear localization signal element; it reads VPPGRRHHCRSKAKRSR. Basic residues predominate over residues 823–840; it reads GRRHHCRSKAKRSRHHHT. A compositionally biased stretch (pro residues) spans 853–867; that stretch reads SPVPPSGPWPPPPST. The span at 943 to 954 shows a compositional bias: low complexity; sequence ASHSPSPSLTPL. Residues 967–979 show a composition bias toward polar residues; it reads FNSRCSSPLQLNL. 2 positions are modified to phosphoserine: serine 972 and serine 973. Positions 975 to 982 match the Nuclear export signal 3 motif; it reads LQLNLLQL. The LXXLL signature appears at 1036–1040; the sequence is LELLL. Low complexity predominate over residues 1045-1055; the sequence is RSGTGSAASGS. Disordered stretches follow at residues 1045-1091 and 1202-1285; these read RSGT…SKYF and IQDP…NSTS. The segment covering 1056-1070 has biased composition (gly residues); the sequence is LGSGLGSGSGSGSHE. Positions 1071 to 1088 are enriched in low complexity; the sequence is GGSTSASITRSSQSSHTS. A CRY binding domain region spans residues 1142-1285; it reads SRDRASVLKQ…ALPAEENSTS (144 aa). The span at 1229-1241 shows a compositional bias: gly residues; that stretch reads GEGGGGGGGGGEG. Over residues 1269–1285 the composition is skewed to polar residues; it reads GGSSSSPALPAEENSTS.

In terms of assembly, homodimer. Component of the circadian core oscillator, which includes the CRY proteins, CLOCK or NPAS2, BMAL1 or BMAL2, CSNK1D and/or CSNK1E, TIMELESS, and the PER proteins. Interacts directly with TIMELESS, PER2, PER3, CRY1 and CRY2. Interacts with BMAL1 and CLOCK. Interacts with GPRASP1. Interacts (phosphorylated) with BTRC and FBXW11; the interactions trigger proteasomal degradation. Interacts with NONO, WDR5 and SFPQ. Interacts with USP2. Interacts with HNF4A. Post-translationally, phosphorylated on serine residues by CSNK1D, CSNK1E and probably also by CSNK1G2. Phosphorylation by CSNK1D or CSNK1E promotes nuclear location of PER proteins as well as ubiquitination and subsequent degradation. May be dephosphorylated by PP1. Ubiquitinated; requires phosphorylation by CSNK1E and interaction with BTRC and FBXW11. Deubiquitinated by USP2. Expressed in the brain, mainly in the suprachiasmatic nucleus (SCN). Expression also found in the harderian gland, lung, eye, intestine, liver and skeletal muscle.

The protein localises to the nucleus. It localises to the cytoplasm. Transcriptional repressor which forms a core component of the circadian clock. The circadian clock, an internal time-keeping system, regulates various physiological processes through the generation of approximately 24 hour circadian rhythms in gene expression, which are translated into rhythms in metabolism and behavior. It is derived from the Latin roots 'circa' (about) and 'diem' (day) and acts as an important regulator of a wide array of physiological functions including metabolism, sleep, body temperature, blood pressure, endocrine, immune, cardiovascular, and renal function. Consists of two major components: the central clock, residing in the suprachiasmatic nucleus (SCN) of the brain, and the peripheral clocks that are present in nearly every tissue and organ system. Both the central and peripheral clocks can be reset by environmental cues, also known as Zeitgebers (German for 'timegivers'). The predominant Zeitgeber for the central clock is light, which is sensed by retina and signals directly to the SCN. The central clock entrains the peripheral clocks through neuronal and hormonal signals, body temperature and feeding-related cues, aligning all clocks with the external light/dark cycle. Circadian rhythms allow an organism to achieve temporal homeostasis with its environment at the molecular level by regulating gene expression to create a peak of protein expression once every 24 hours to control when a particular physiological process is most active with respect to the solar day. Transcription and translation of core clock components (CLOCK, NPAS2, BMAL1, BMAL2, PER1, PER2, PER3, CRY1 and CRY2) plays a critical role in rhythm generation, whereas delays imposed by post-translational modifications (PTMs) are important for determining the period (tau) of the rhythms (tau refers to the period of a rhythm and is the length, in time, of one complete cycle). A diurnal rhythm is synchronized with the day/night cycle, while the ultradian and infradian rhythms have a period shorter and longer than 24 hours, respectively. Disruptions in the circadian rhythms contribute to the pathology of cardiovascular diseases, cancer, metabolic syndromes and aging. A transcription/translation feedback loop (TTFL) forms the core of the molecular circadian clock mechanism. Transcription factors, CLOCK or NPAS2 and BMAL1 or BMAL2, form the positive limb of the feedback loop, act in the form of a heterodimer and activate the transcription of core clock genes and clock-controlled genes (involved in key metabolic processes), harboring E-box elements (5'-CACGTG-3') within their promoters. The core clock genes: PER1/2/3 and CRY1/2 which are transcriptional repressors form the negative limb of the feedback loop and interact with the CLOCK|NPAS2-BMAL1|BMAL2 heterodimer inhibiting its activity and thereby negatively regulating their own expression. This heterodimer also activates nuclear receptors NR1D1/2 and RORA/B/G, which form a second feedback loop and which activate and repress BMAL1 transcription, respectively. Regulates circadian target genes expression at post-transcriptional levels, but may not be required for the repression at transcriptional level. Controls PER2 protein decay. Represses CRY2 preventing its repression on CLOCK/BMAL1 target genes such as FXYD5 and SCNN1A in kidney and PPARA in liver. Besides its involvement in the maintenance of the circadian clock, has an important function in the regulation of several processes. Participates in the repression of glucocorticoid receptor NR3C1/GR-induced transcriptional activity by reducing the association of NR3C1/GR to glucocorticoid response elements (GREs) by BMAL1:CLOCK. Plays a role in the modulation of the neuroinflammatory state via the regulation of inflammatory mediators release, such as CCL2 and IL6. In spinal astrocytes, negatively regulates the MAPK14/p38 and MAPK8/JNK MAPK cascades as well as the subsequent activation of NFkappaB. Coordinately regulates the expression of multiple genes that are involved in the regulation of renal sodium reabsorption. Can act as gene expression activator in a gene and tissue specific manner, in kidney enhances WNK1 and SLC12A3 expression in collaboration with CLOCK. Modulates hair follicle cycling. Represses the CLOCK-BMAL1 induced transcription of BHLHE40/DEC1. In Spalax judaei (Judean Mountains blind mole rat), this protein is Period circadian protein homolog 1 (PER1).